A 456-amino-acid polypeptide reads, in one-letter code: 3-isopropylmalate dehydratase large subunit (456 aa).

Residues cysteine 336, cysteine 396, and cysteine 399 each coordinate [4Fe-4S] cluster.

This sequence belongs to the aconitase/IPM isomerase family. LeuC type 1 subfamily. Heterodimer of LeuC and LeuD. It depends on [4Fe-4S] cluster as a cofactor.

It catalyses the reaction (2R,3S)-3-isopropylmalate = (2S)-2-isopropylmalate. The protein operates within amino-acid biosynthesis; L-leucine biosynthesis; L-leucine from 3-methyl-2-oxobutanoate: step 2/4. Catalyzes the isomerization between 2-isopropylmalate and 3-isopropylmalate, via the formation of 2-isopropylmaleate. This chain is 3-isopropylmalate dehydratase large subunit, found in Staphylococcus epidermidis (strain ATCC 35984 / DSM 28319 / BCRC 17069 / CCUG 31568 / BM 3577 / RP62A).